Here is a 382-residue protein sequence, read N- to C-terminus: Polyadenylate-binding protein 5 (382 aa).

4 RRM domains span residues 18–96 (AALY…WSQP), 106–182 (GNIF…RFKF), 199–276 (TNVF…RAQK), and 302–378 (VPIY…LGQA).

The protein resides in the cytoplasm. Its function is as follows. Binds the poly(A) tail of mRNA. May be involved in cytoplasmic regulatory processes of mRNA metabolism. Can probably bind to cytoplasmic RNA sequences other than poly(A) in vivo. This chain is Polyadenylate-binding protein 5 (PABPC5), found in Macaca mulatta (Rhesus macaque).